Here is a 675-residue protein sequence, read N- to C-terminus: Vitamin K-dependent protein S (675 aa).

Residues 1 to 24 (MRVLSARFRVLLACLALVIPVSET) form the signal peptide. A propeptide spanning residues 25-41 (NFLSKERASQVLVRKRR) is cleaved from the precursor. One can recognise a Gla domain in the interval 42–87 (ANTLFEETMKGNLERECIEELCNKEEAREVFENNPETDYFYPKYLG). 4-carboxyglutamate is present on residues glutamate 47, glutamate 48, glutamate 55, glutamate 57, glutamate 60, glutamate 61, glutamate 66, glutamate 67, glutamate 70, glutamate 73, and glutamate 77. Cysteines 58 and 63 form a disulfide. The interval 88–116 (CLGAFRVGSFHAARQSANAYPDLRSCVKA) is thrombin-sensitive. Residues 117–155 (ISDQCDPIPCNEDGYLACQDGQAAFTCFCKPGWQGDRCQ) form the EGF-like 1 domain. 13 cysteine pairs are disulfide-bonded: cysteine 121-cysteine 134, cysteine 126-cysteine 143, cysteine 145-cysteine 154, cysteine 161-cysteine 175, cysteine 171-cysteine 184, cysteine 186-cysteine 199, cysteine 205-cysteine 217, cysteine 212-cysteine 226, cysteine 228-cysteine 241, cysteine 247-cysteine 256, cysteine 252-cysteine 265, cysteine 267-cysteine 282, and cysteine 449-cysteine 475. Aspartate 136 bears the (3R)-3-hydroxyaspartate mark. One can recognise an EGF-like 2; calcium-binding domain in the interval 157–200 (DVNECKDPSNVNGGCSQICDNTPGSYHCSCKRGFAMLPNKKDCK). Residues 201 to 242 (DLDECALKPSVCGTAVCKNIPGDFECECPDGYRYDPSSKSCK) form the EGF-like 3; calcium-binding domain. Positions 243 to 283 (DVDECSENMCAQLCVNFPGGYSCYCDGKKGFKLAQDQKSCE) constitute an EGF-like 4; calcium-binding domain. Laminin G-like domains lie at 299 to 475 (LLYL…NKHC) and 484 to 665 (YYPG…AHSC). 2 N-linked (GlcNAc...) asparagine glycosylation sites follow: asparagine 499 and asparagine 509. Cysteines 638 and 665 form a disulfide.

Post-translationally, the iron and 2-oxoglutarate dependent 3-hydroxylation of aspartate and asparagine is (R) stereospecific within EGF domains. Plasma.

The protein resides in the secreted. Its function is as follows. Anticoagulant plasma protein; it is a cofactor to activated protein C in the degradation of coagulation factors Va and VIIIa. It helps to prevent coagulation and stimulating fibrinolysis. This is Vitamin K-dependent protein S (Pros1) from Mus musculus (Mouse).